A 377-amino-acid chain; its full sequence is DNA-directed RNA polymerase subunit alpha (377 aa).

The alpha N-terminal domain (alpha-NTD) stretch occupies residues 1-259; that stretch reads MSDSSHNLLY…KHFSVFEKMD (259 aa). The interval 276 to 377 is alpha C-terminal domain (alpha-CTD); that stretch reads KDDILHKLVL…KIRLSKNTKG (102 aa).

This sequence belongs to the RNA polymerase alpha chain family. In terms of assembly, homodimer. The RNAP catalytic core consists of 2 alpha, 1 beta, 1 beta' and 1 omega subunit. When a sigma factor is associated with the core the holoenzyme is formed, which can initiate transcription.

It catalyses the reaction RNA(n) + a ribonucleoside 5'-triphosphate = RNA(n+1) + diphosphate. DNA-dependent RNA polymerase catalyzes the transcription of DNA into RNA using the four ribonucleoside triphosphates as substrates. In Chlamydia trachomatis serovar A (strain ATCC VR-571B / DSM 19440 / HAR-13), this protein is DNA-directed RNA polymerase subunit alpha.